A 360-amino-acid chain; its full sequence is Cyclin-D1-binding protein 1 (360 aa).

At A2 the chain carries N-acetylalanine. Interaction with TCF3 regions lie at residues A2–V184 and I150–L360. Interaction with RPLP0 regions lie at residues A2–E190 and L240–L360. The tract at residues A2–T208 is required for interaction with CCND1.

The protein belongs to the CCNDBP1 family. As to quaternary structure, interacts with CCND1 and GRAP2. May also interact with COPS5, RPLP0, SIRT6, SYF2 and TCF3. Post-translationally, phosphorylated. In terms of tissue distribution, ubiquitously expressed. Expression is down-regulated in a variety of tumor types including breast, colon, prostate and rectal tumors, and is up-regulated in certain hepatic carcinomas.

It localises to the cytoplasm. Its subcellular location is the nucleus. Its function is as follows. May negatively regulate cell cycle progression. May act at least in part via inhibition of the cyclin-D1/CDK4 complex, thereby preventing phosphorylation of RB1 and blocking E2F-dependent transcription. The chain is Cyclin-D1-binding protein 1 (CCNDBP1) from Homo sapiens (Human).